The sequence spans 702 residues: Polyribonucleotide nucleotidyltransferase (702 aa).

Mg(2+) contacts are provided by Asp-485 and Asp-491. The KH domain maps to 552 to 612 (PRTEIICIDP…EGVKKAISII (61 aa)). One can recognise an S1 motif domain in the interval 622 to 690 (GEIYLGKVTK…NQGRINLSRK (69 aa)).

This sequence belongs to the polyribonucleotide nucleotidyltransferase family. Requires Mg(2+) as cofactor.

The protein resides in the cytoplasm. The enzyme catalyses RNA(n+1) + phosphate = RNA(n) + a ribonucleoside 5'-diphosphate. Functionally, involved in mRNA degradation. Catalyzes the phosphorolysis of single-stranded polyribonucleotides processively in the 3'- to 5'-direction. This chain is Polyribonucleotide nucleotidyltransferase, found in Clostridium botulinum (strain 657 / Type Ba4).